The sequence spans 37 residues: Large ribosomal subunit protein bL36 (37 aa).

This sequence belongs to the bacterial ribosomal protein bL36 family.

This chain is Large ribosomal subunit protein bL36, found in Prochlorococcus marinus (strain MIT 9303).